We begin with the raw amino-acid sequence, 209 residues long: Large ribosomal subunit protein uL3 (209 aa).

A disordered region spans residues 118 to 152 (GFQGAIKRHGQSRGPMSHGSRYHRRPGSMGPVDPN).

Belongs to the universal ribosomal protein uL3 family. As to quaternary structure, part of the 50S ribosomal subunit. Forms a cluster with proteins L14 and L19.

In terms of biological role, one of the primary rRNA binding proteins, it binds directly near the 3'-end of the 23S rRNA, where it nucleates assembly of the 50S subunit. This is Large ribosomal subunit protein uL3 from Bacillus licheniformis (strain ATCC 14580 / DSM 13 / JCM 2505 / CCUG 7422 / NBRC 12200 / NCIMB 9375 / NCTC 10341 / NRRL NRS-1264 / Gibson 46).